A 686-amino-acid polypeptide reads, in one-letter code: Epsin (686 aa).

An ENTH domain is found at 14 to 145 (DAVLNTPEIE…QDDQRIKEER (132 aa)). 2 disordered regions span residues 177–417 (YDSD…FNNN) and 463–571 (NSSM…TMRP). The span at 185–211 (NQRDSYGGNQRDSYGGNQRDSYGGNQR) shows a compositional bias: polar residues. Positions 212 to 225 (ETTRRDSFNGRDEG) are enriched in basic and acidic residues. The segment covering 237–256 (SYDSDPYSNTRAEYENYSNR) has biased composition (polar residues). 2 stretches are compositionally biased toward low complexity: residues 269–340 (SNNS…SGPS) and 383–417 (NNTN…FNNN). Polar residues predominate over residues 491 to 503 (FDQQSGDFSNKND). A compositionally biased stretch (basic and acidic residues) spans 504–521 (GQQKPKDTNDPWSKKDLF). A compositionally biased stretch (low complexity) spans 527–547 (GNQNPNQSPVNNTNNNNNGNT). Residues 558 to 567 (PITSAGSTIP) show a composition bias toward polar residues.

The protein belongs to the epsin family.

Its subcellular location is the membrane. It is found in the clathrin-coated pit. Its function is as follows. Binds to membranes enriched in phosphatidylinositol 4,5-bisphosphate (PtdIns(4,5)P2). The chain is Epsin (epnA) from Dictyostelium discoideum (Social amoeba).